A 409-amino-acid polypeptide reads, in one-letter code: Elongation factor Tu (409 aa).

In terms of domain architecture, tr-type G spans 10–214 (KPHVNIGTIG…AVDDNIPEPE (205 aa)). The segment at 19 to 26 (GHVDHGKT) is G1. 19–26 (GHVDHGKT) is a binding site for GTP. Threonine 26 provides a ligand contact to Mg(2+). Residues 60–64 (GITIN) are G2. The segment at 81–84 (DCPG) is G3. Residues 81–85 (DCPGH) and 136–139 (NKKD) contribute to the GTP site. Residues 136–139 (NKKD) are G4. Residues 174 to 176 (SAL) form a G5 region.

This sequence belongs to the TRAFAC class translation factor GTPase superfamily. Classic translation factor GTPase family. EF-Tu/EF-1A subfamily. As to quaternary structure, monomer.

It is found in the cytoplasm. The catalysed reaction is GTP + H2O = GDP + phosphate + H(+). Functionally, GTP hydrolase that promotes the GTP-dependent binding of aminoacyl-tRNA to the A-site of ribosomes during protein biosynthesis. This is Elongation factor Tu from Crocosphaera subtropica (strain ATCC 51142 / BH68) (Cyanothece sp. (strain ATCC 51142)).